Consider the following 240-residue polypeptide: Methylthioribulose-1-phosphate dehydratase (240 aa).

Cys99 is a binding site for substrate. Zn(2+) contacts are provided by His116 and His118. The Proton donor/acceptor role is filled by Glu145. His201 is a Zn(2+) binding site.

Belongs to the aldolase class II family. MtnB subfamily. Zn(2+) serves as cofactor.

The protein localises to the cytoplasm. The catalysed reaction is 5-(methylsulfanyl)-D-ribulose 1-phosphate = 5-methylsulfanyl-2,3-dioxopentyl phosphate + H2O. Its pathway is amino-acid biosynthesis; L-methionine biosynthesis via salvage pathway; L-methionine from S-methyl-5-thio-alpha-D-ribose 1-phosphate: step 2/6. Functionally, catalyzes the dehydration of methylthioribulose-1-phosphate (MTRu-1-P) into 2,3-diketo-5-methylthiopentyl-1-phosphate (DK-MTP-1-P). In Paracoccidioides brasiliensis (strain Pb18), this protein is Methylthioribulose-1-phosphate dehydratase.